A 499-amino-acid polypeptide reads, in one-letter code: Maturase K (499 aa).

The protein belongs to the intron maturase 2 family. MatK subfamily.

Its subcellular location is the plastid. The protein resides in the chloroplast. In terms of biological role, usually encoded in the trnK tRNA gene intron. Probably assists in splicing its own and other chloroplast group II introns. This is Maturase K from Chamaecrista fasciculata (Showy partridge pea).